A 333-amino-acid chain; its full sequence is Transaldolase (333 aa).

Residue Lys135 is the Schiff-base intermediate with substrate of the active site.

It belongs to the transaldolase family. Type 1 subfamily. In terms of assembly, homodimer.

It is found in the cytoplasm. It carries out the reaction D-sedoheptulose 7-phosphate + D-glyceraldehyde 3-phosphate = D-erythrose 4-phosphate + beta-D-fructose 6-phosphate. It functions in the pathway carbohydrate degradation; pentose phosphate pathway; D-glyceraldehyde 3-phosphate and beta-D-fructose 6-phosphate from D-ribose 5-phosphate and D-xylulose 5-phosphate (non-oxidative stage): step 2/3. Its function is as follows. Transaldolase is important for the balance of metabolites in the pentose-phosphate pathway. In Prochlorococcus marinus (strain MIT 9301), this protein is Transaldolase.